A 126-amino-acid chain; its full sequence is Profilin-1A (126 aa).

The tract at residues 2–36 (SWQTYVDTNLVGTGAVTQAAILGLDGNTWATSAGF) is actin binding. N6,N6,N6-trimethyllysine is present on lysine 104.

This sequence belongs to the profilin family. Occurs in many kinds of cells as a complex with monomeric actin in a 1:1 ratio.

It is found in the cytoplasm. Its subcellular location is the cytoskeleton. In terms of biological role, binds to actin and affects the structure of the cytoskeleton. At high concentrations, profilin prevents the polymerization of actin, whereas it enhances it at low concentrations. By binding to PIP2, it inhibits the formation of IP3 and DG. The chain is Profilin-1A from Acanthamoeba castellanii (Amoeba).